We begin with the raw amino-acid sequence, 1004 residues long: MDINELIIGAQSADKHTREVAETQLLQWCDSDASQVFKALANVALQHEASLESRQFALLSLRKLITMYWSPGFESYRSTSNVEIDVKDFIREVLLKLCLNDNENTKIKNGASYCIVQISAVDFPDQWPQLLTVIYDAISHQHSLNAMSLLNEIYDDVVSEEMFFEGGIGLATMEIVFKVLNTETSTLIAKIAALKLLKACLLQMSSHNEYDEASRKSFVSQCLATSLQILGQLLTLNFGNVDVISQLKFKSIIYENLVFIKNDFSRKHFSSELQKQFKIMAIQDLENVTHINANVETTESEPLLETVHDCSIYIVEFLTSVCTLQFSVEEMNKIITSLTILCQLSSETREIWTSDFNTFVSKETGLAASYNVRDQANEFFTSLPNPQLSLIFKVVSNDIEHSTCNYSTLESLLYLLQCILLNDDEITGENIDQSLQILIKTLENILVSQEIPELILARAILTIPRVLDKFIDALPDIKPLTSAFLAKSLNLALKSDKELIKSATLIAFTYYCYFAELDSVLGPEVCSETQEKVIRIINQVSSDAEEDTNGALMEVLSQVISYNPKEPHSRKEILQAEFHLVFTISSEDPANVQVVVQSQECLEKLLDNINMDNYKNYIELCLPSFINVLDSNNANNYRYSPLLSLVLEFITVFLKKKPNDGFLPDEINQYLFEPLAKVLAFSTEDETLQLATEAFSYLIFNTDTRAMEPRLMDIMKVLERLLSLEVSDSAAMNVGPLVVAIFTRFSKEIQPLIGRILEAVVVRLIKTQNISTEQNLLSVLCFLTCNDPKQTVDFLSSFQIDNTDALTLVMRKWIEAFEVIRGEKRIKENIVALSNLFFLNDKRLQKVVVNGNLIPYEGDLIITRSMAKKMPDRYVQVPLYTKIIKLFVSELSFQSKQPNPEQLITSDIKQEVVNANKDDDNDDWEDVDDVLDYDKLKEYIDDDVDEEADDDSDDITGLMDVKESVVQLLVRFFKEVASKDVSGFHCIYETLSDSERKVLSEALL.

The residue at position 1 (Met-1) is an N-acetylmethionine. Positions 21–100 (AETQLLQWCD…REVLLKLCLN (80 aa)) constitute an Importin N-terminal domain.

The protein belongs to the importin beta family. Interacts with NAP1.

Its subcellular location is the cytoplasm. It localises to the nucleus. It is found in the nuclear pore complex. Its function is as follows. Required for nuclear protein import and mediates docking of import substrate to distinct nucleoporins. Serves a receptor for nuclear localization signals. Mediates the nuclear import of TATA-binding protein (TBP) and of histones H2A and H2B. The protein is Importin subunit beta-5 (KAP114) of Saccharomyces cerevisiae (strain ATCC 204508 / S288c) (Baker's yeast).